A 190-amino-acid polypeptide reads, in one-letter code: Transcription factor bHLH162 (190 aa).

The span at 1–12 (MEPSHSNTGQSR) shows a compositional bias: polar residues. A disordered region spans residues 1 to 21 (MEPSHSNTGQSRSVDRKTVEK). Positions 11–63 (SRSVDRKTVEKNRRMQMKSLYSELISLLPHHSSTEPLTLPDQLDEAANYIKKL) constitute a bHLH domain.

The protein belongs to the bHLH protein family.

It is found in the nucleus. The chain is Transcription factor bHLH162 from Arabidopsis thaliana (Mouse-ear cress).